We begin with the raw amino-acid sequence, 309 residues long: Porphobilinogen deaminase (309 aa).

Residue cysteine 244 is modified to S-(dipyrrolylmethanemethyl)cysteine.

This sequence belongs to the HMBS family. As to quaternary structure, monomer. Dipyrromethane serves as cofactor.

It catalyses the reaction 4 porphobilinogen + H2O = hydroxymethylbilane + 4 NH4(+). The protein operates within porphyrin-containing compound metabolism; protoporphyrin-IX biosynthesis; coproporphyrinogen-III from 5-aminolevulinate: step 2/4. Tetrapolymerization of the monopyrrole PBG into the hydroxymethylbilane pre-uroporphyrinogen in several discrete steps. This is Porphobilinogen deaminase from Listeria innocua serovar 6a (strain ATCC BAA-680 / CLIP 11262).